The following is a 149-amino-acid chain: D-aminoacyl-tRNA deacylase (149 aa).

A Gly-cisPro motif, important for rejection of L-amino acids motif is present at residues 137 to 138 (GP).

Belongs to the DTD family. In terms of assembly, homodimer.

The protein resides in the cytoplasm. It carries out the reaction glycyl-tRNA(Ala) + H2O = tRNA(Ala) + glycine + H(+). The enzyme catalyses a D-aminoacyl-tRNA + H2O = a tRNA + a D-alpha-amino acid + H(+). Functionally, an aminoacyl-tRNA editing enzyme that deacylates mischarged D-aminoacyl-tRNAs. Also deacylates mischarged glycyl-tRNA(Ala), protecting cells against glycine mischarging by AlaRS. Acts via tRNA-based rather than protein-based catalysis; rejects L-amino acids rather than detecting D-amino acids in the active site. By recycling D-aminoacyl-tRNA to D-amino acids and free tRNA molecules, this enzyme counteracts the toxicity associated with the formation of D-aminoacyl-tRNA entities in vivo and helps enforce protein L-homochirality. The chain is D-aminoacyl-tRNA deacylase from Paracoccus denitrificans (strain Pd 1222).